The primary structure comprises 339 residues: Nitrilase (339 aa).

Residues 7–277 (YRVAAVQASP…EGITYADIDL (271 aa)) form the CN hydrolase domain. Residue E47 is the Proton acceptor of the active site. K128 (proton donor) is an active-site residue. Catalysis depends on C162, which acts as the Nucleophile.

This sequence belongs to the carbon-nitrogen hydrolase superfamily. Nitrilase family.

It carries out the reaction a nitrile + 2 H2O = a carboxylate + NH4(+). In Bacillus sp. (strain OxB-1), this protein is Nitrilase (nit).